A 155-amino-acid chain; its full sequence is MADLSSLKDLGTVSEAAAPAHVRKVDSLGRSYATGKRKNAVARVWVKPGSGKITVNGKEFAEYFARPVLQMILRQPIVAAARDGQFDIVATVAGGGLSGQAGAVRHGVSKALTYFEPGLRAVLKKGGFLTRDSRVVERKKYGKAKARRSFQFSKR.

It belongs to the universal ribosomal protein uS9 family.

The protein is Small ribosomal subunit protein uS9 of Rhizobium johnstonii (strain DSM 114642 / LMG 32736 / 3841) (Rhizobium leguminosarum bv. viciae).